The following is a 42-amino-acid chain: Large ribosomal subunit protein bL36 (42 aa).

This sequence belongs to the bacterial ribosomal protein bL36 family.

The polypeptide is Large ribosomal subunit protein bL36 (Ehrlichia chaffeensis (strain ATCC CRL-10679 / Arkansas)).